The sequence spans 208 residues: Small ribosomal subunit protein uS5 (208 aa).

Positions Met-1–Arg-38 are disordered. Residues Tyr-41–Val-104 enclose the S5 DRBM domain.

This sequence belongs to the universal ribosomal protein uS5 family. In terms of assembly, part of the 30S ribosomal subunit. Contacts proteins S4 and S8.

With S4 and S12 plays an important role in translational accuracy. In terms of biological role, located at the back of the 30S subunit body where it stabilizes the conformation of the head with respect to the body. The sequence is that of Small ribosomal subunit protein uS5 from Corynebacterium diphtheriae (strain ATCC 700971 / NCTC 13129 / Biotype gravis).